Here is a 540-residue protein sequence, read N- to C-terminus: Pentatricopeptide repeat-containing protein At3g29290 (540 aa).

PPR repeat units lie at residues 106–140, 141–175, 177–205, 213–247, 248–282, 283–317, 318–352, 353–387, 389–423, 424–458, 459–487, and 489–523; these read NEET…GLQP, NAHA…ENVT, HTYS…LERE, DVVL…GHIG, TEIT…KISL, REDA…GMKP, NLVA…GHKP, DEYT…NLCC, NEYL…GLTV, STSS…DCKP, NTFT…KKVE, and DVSL…GLEP.

It belongs to the PPR family. P subfamily.

This chain is Pentatricopeptide repeat-containing protein At3g29290 (EMB2076), found in Arabidopsis thaliana (Mouse-ear cress).